A 76-amino-acid polypeptide reads, in one-letter code: Small ribosomal subunit protein bS18 (76 aa).

The protein belongs to the bacterial ribosomal protein bS18 family. In terms of assembly, part of the 30S ribosomal subunit. Forms a tight heterodimer with protein bS6.

Functionally, binds as a heterodimer with protein bS6 to the central domain of the 16S rRNA, where it helps stabilize the platform of the 30S subunit. The polypeptide is Small ribosomal subunit protein bS18 (Azotobacter vinelandii (strain DJ / ATCC BAA-1303)).